A 218-amino-acid polypeptide reads, in one-letter code: Octanoyltransferase (218 aa).

Residues 32–211 (INTYDEIWFL…KLSQLLNVSI (180 aa)) form the BPL/LPL catalytic domain. Substrate contacts are provided by residues 75–82 (RGGQITYH), 142–144 (SLG), and 155–157 (GLS). Catalysis depends on Cys173, which acts as the Acyl-thioester intermediate.

This sequence belongs to the LipB family.

Its subcellular location is the cytoplasm. It catalyses the reaction octanoyl-[ACP] + L-lysyl-[protein] = N(6)-octanoyl-L-lysyl-[protein] + holo-[ACP] + H(+). It functions in the pathway protein modification; protein lipoylation via endogenous pathway; protein N(6)-(lipoyl)lysine from octanoyl-[acyl-carrier-protein]: step 1/2. Its function is as follows. Catalyzes the transfer of endogenously produced octanoic acid from octanoyl-acyl-carrier-protein onto the lipoyl domains of lipoate-dependent enzymes. Lipoyl-ACP can also act as a substrate although octanoyl-ACP is likely to be the physiological substrate. The polypeptide is Octanoyltransferase (Buchnera aphidicola subsp. Schizaphis graminum (strain Sg)).